Consider the following 117-residue polypeptide: Nascent polypeptide-associated complex protein (117 aa).

The NAC-A/B domain occupies 9–77; sequence PKQLKQMQRA…ARERSLEAEM (69 aa).

Belongs to the NAC-alpha family. Homodimer. Interacts with the ribosome. Binds ribosomal RNA.

In terms of biological role, contacts the emerging nascent chain on the ribosome. The protein is Nascent polypeptide-associated complex protein of Methanothermobacter thermautotrophicus (strain ATCC 29096 / DSM 1053 / JCM 10044 / NBRC 100330 / Delta H) (Methanobacterium thermoautotrophicum).